We begin with the raw amino-acid sequence, 346 residues long: uncharacterized protein (346 aa).

Residues 7–27 (AMVILLIICGTYVLFIQYGSV) form a helical membrane-spanning segment. The disordered stretch occupies residues 29 to 48 (EKKSNDSEPQVSNEEAQSGK). Over residues 35–44 (SEPQVSNEEA) the composition is skewed to polar residues. Residues 231–342 (LDLTNVIRVK…VDRKYYTQNF (112 aa)) enclose the SCP domain.

The protein resides in the cell membrane. This is an uncharacterized protein from Bacillus subtilis (strain 168).